A 460-amino-acid chain; its full sequence is MTSYSTNMRIKLPLFCLLLQFITIILFAVFVRYDHESDARGWHEELNNHSSSNADNDFYYRYPSFQDVHVMIFIGFGFLMTFLKRYGFSSVAFNFLIAAFGLQWSTLIQGFFHGFHDGKIHVGIESMINADFCTGAVLISFGAVLGKTSPVQLIIMTLVEVTLFGINEYIILNIVGAKDAGGSMTIHTFGAYFGLIVSRVLYREDLEKSRQREGSVYHSDLFAMIGTIYLWMFWPSFNSAVTAHGDDQHRTVMNTYYSLAACTLATFGFSALLNGEGKLDMVHIQNAALAGGVAVGTSGEMMLTPFGAMIAGTLAGMISVLGYKYLTPVLDSKLKIQDTCGVHNLHGMPGILGAIIGAIVALFATADIYGDGMGDVFPLISDGSRTAKQQSLYQFLALLVALGFAIIGGTVVGFILKLPIFGTPSDAECFEDAIYWEVPGGEGHQQLTVVINNEDPDTQA.

The Cytoplasmic segment spans residues 1–10 (MTSYSTNMRI). A helical transmembrane segment spans residues 11–31 (KLPLFCLLLQFITIILFAVFV). At 32-62 (RYDHESDARGWHEELNNHSSSNADNDFYYRY) the chain is on the extracellular side. Residue Asn48 is glycosylated (N-linked (GlcNAc...) asparagine). Residues 63–83 (PSFQDVHVMIFIGFGFLMTFL) form a helical membrane-spanning segment. The Cytoplasmic segment spans residues 84-87 (KRYG). Residues 88–108 (FSSVAFNFLIAAFGLQWSTLI) traverse the membrane as a helical segment. The Extracellular portion of the chain corresponds to 109-125 (QGFFHGFHDGKIHVGIE). A helical transmembrane segment spans residues 126 to 146 (SMINADFCTGAVLISFGAVLG). At 147–150 (KTSP) the chain is on the cytoplasmic side. Residues 151–171 (VQLIIMTLVEVTLFGINEYII) form a helical membrane-spanning segment. The Extracellular portion of the chain corresponds to 172-179 (LNIVGAKD). The helical transmembrane segment at 180-202 (AGGSMTIHTFGAYFGLIVSRVLY) threads the bilayer. Topologically, residues 203–220 (REDLEKSRQREGSVYHSD) are cytoplasmic. Residues 221-241 (LFAMIGTIYLWMFWPSFNSAV) traverse the membrane as a helical segment. The Extracellular portion of the chain corresponds to 242 to 252 (TAHGDDQHRTV). A helical membrane pass occupies residues 253–273 (MNTYYSLAACTLATFGFSALL). Residues 274–283 (NGEGKLDMVH) lie on the Cytoplasmic side of the membrane. A helical membrane pass occupies residues 284–304 (IQNAALAGGVAVGTSGEMMLT). Pro305 is a topological domain (extracellular). Residues 306-326 (FGAMIAGTLAGMISVLGYKYL) form a helical membrane-spanning segment. Over 327-347 (TPVLDSKLKIQDTCGVHNLHG) the chain is Cytoplasmic. Residues 348-368 (MPGILGAIIGAIVALFATADI) traverse the membrane as a helical segment. The Extracellular segment spans residues 369-394 (YGDGMGDVFPLISDGSRTAKQQSLYQ). Residues 395–415 (FLALLVALGFAIIGGTVVGFI) form a helical membrane-spanning segment. Residues 416 to 460 (LKLPIFGTPSDAECFEDAIYWEVPGGEGHQQLTVVINNEDPDTQA) are Cytoplasmic-facing.

The protein belongs to the ammonium transporter (TC 2.A.49) family. Rh subfamily.

It localises to the basolateral cell membrane. Its subcellular location is the cytoplasmic vesicle membrane. Its function is as follows. Functions as a specific ammonium transporter. In Xenopus laevis (African clawed frog), this protein is Ammonium transporter Rh type B-B (rhbg-b).